The chain runs to 123 residues: Holo-[acyl-carrier-protein] synthase (123 aa).

Mg(2+)-binding residues include D8 and E56.

The protein belongs to the P-Pant transferase superfamily. AcpS family. It depends on Mg(2+) as a cofactor.

The protein resides in the cytoplasm. The catalysed reaction is apo-[ACP] + CoA = holo-[ACP] + adenosine 3',5'-bisphosphate + H(+). In terms of biological role, transfers the 4'-phosphopantetheine moiety from coenzyme A to a Ser of acyl-carrier-protein. This is Holo-[acyl-carrier-protein] synthase from Treponema denticola (strain ATCC 35405 / DSM 14222 / CIP 103919 / JCM 8153 / KCTC 15104).